Here is a 64-residue protein sequence, read N- to C-terminus: Large ribosomal subunit protein bL35 (64 aa).

The protein belongs to the bacterial ribosomal protein bL35 family.

In Alcanivorax borkumensis (strain ATCC 700651 / DSM 11573 / NCIMB 13689 / SK2), this protein is Large ribosomal subunit protein bL35.